Reading from the N-terminus, the 504-residue chain is Maturase K (504 aa).

Belongs to the intron maturase 2 family. MatK subfamily.

The protein localises to the plastid. The protein resides in the chloroplast. In terms of biological role, usually encoded in the trnK tRNA gene intron. Probably assists in splicing its own and other chloroplast group II introns. This is Maturase K from Alliaria petiolata (Garlic mustard).